The primary structure comprises 292 residues: Ribosomal protein L11 methyltransferase (292 aa).

The S-adenosyl-L-methionine site is built by T144, G165, D187, and N229.

Belongs to the methyltransferase superfamily. PrmA family.

It is found in the cytoplasm. It carries out the reaction L-lysyl-[protein] + 3 S-adenosyl-L-methionine = N(6),N(6),N(6)-trimethyl-L-lysyl-[protein] + 3 S-adenosyl-L-homocysteine + 3 H(+). In terms of biological role, methylates ribosomal protein L11. In Pseudomonas putida (strain ATCC 700007 / DSM 6899 / JCM 31910 / BCRC 17059 / LMG 24140 / F1), this protein is Ribosomal protein L11 methyltransferase.